Here is a 298-residue protein sequence, read N- to C-terminus: UDP-3-O-acyl-N-acetylglucosamine deacetylase (298 aa).

Residues H80, H239, and D243 each coordinate Zn(2+). H266 (proton donor) is an active-site residue.

The protein belongs to the LpxC family. The cofactor is Zn(2+).

The catalysed reaction is a UDP-3-O-[(3R)-3-hydroxyacyl]-N-acetyl-alpha-D-glucosamine + H2O = a UDP-3-O-[(3R)-3-hydroxyacyl]-alpha-D-glucosamine + acetate. It functions in the pathway glycolipid biosynthesis; lipid IV(A) biosynthesis; lipid IV(A) from (3R)-3-hydroxytetradecanoyl-[acyl-carrier-protein] and UDP-N-acetyl-alpha-D-glucosamine: step 2/6. Catalyzes the hydrolysis of UDP-3-O-myristoyl-N-acetylglucosamine to form UDP-3-O-myristoylglucosamine and acetate, the committed step in lipid A biosynthesis. In Blochmanniella floridana, this protein is UDP-3-O-acyl-N-acetylglucosamine deacetylase.